The primary structure comprises 461 residues: Photosystem II CP43 reaction center protein (461 aa).

A propeptide spanning residues 1 to 2 (ME) is cleaved from the precursor. Thr3 carries the N-acetylthreonine modification. At Thr3 the chain carries Phosphothreonine. 5 helical membrane passes run 57–81 (LFEV…PHLA), 122–143 (LIGP…KDKN), 166–188 (KAMY…RIIT), 243–263 (TPWP…LSYS), and 279–300 (WFNN…ASQS). Glu355 serves as a coordination point for [CaMn4O5] cluster. Residues 435 to 459 (RARAAAAGFEKGIDRLDEPVLSMRP) form a helical membrane-spanning segment.

This sequence belongs to the PsbB/PsbC family. PsbC subfamily. As to quaternary structure, PSII is composed of 1 copy each of membrane proteins PsbA, PsbB, PsbC, PsbD, PsbE, PsbF, PsbH, PsbI, PsbJ, PsbK, PsbL, PsbM, PsbT, PsbX, PsbY, PsbZ, Psb30/Ycf12, at least 3 peripheral proteins of the oxygen-evolving complex and a large number of cofactors. It forms dimeric complexes. Binds multiple chlorophylls and provides some of the ligands for the Ca-4Mn-5O cluster of the oxygen-evolving complex. It may also provide a ligand for a Cl- that is required for oxygen evolution. PSII binds additional chlorophylls, carotenoids and specific lipids. is required as a cofactor.

The protein localises to the plastid. Its subcellular location is the chloroplast thylakoid membrane. In terms of biological role, one of the components of the core complex of photosystem II (PSII). It binds chlorophyll and helps catalyze the primary light-induced photochemical processes of PSII. PSII is a light-driven water:plastoquinone oxidoreductase, using light energy to abstract electrons from H(2)O, generating O(2) and a proton gradient subsequently used for ATP formation. The sequence is that of Photosystem II CP43 reaction center protein from Tetradesmus obliquus (Green alga).